Here is a 402-residue protein sequence, read N- to C-terminus: CinA-like protein (402 aa).

It belongs to the CinA family.

This chain is CinA-like protein, found in Fusobacterium nucleatum subsp. nucleatum (strain ATCC 25586 / DSM 15643 / BCRC 10681 / CIP 101130 / JCM 8532 / KCTC 2640 / LMG 13131 / VPI 4355).